Reading from the N-terminus, the 479-residue chain is Replication factor C large subunit (479 aa).

43 to 50 is a binding site for ATP; the sequence is GPPGVGKT. Positions 441 to 479 are disordered; the sequence is EEKEESVEEVAEEKPEEEREEPRARKKAGKNLTLDSFFS. The segment covering 452–463 has biased composition (basic and acidic residues); it reads EEKPEEEREEPR.

The protein belongs to the activator 1 small subunits family. RfcL subfamily. Heteropentamer composed of four small subunits (RfcS) and one large subunit (RfcL). Both subunits interact with PCNA.

Its function is as follows. Part of the RFC clamp loader complex which loads the PCNA sliding clamp onto DNA. The complex possesses DNA-dependent ATPase activity which is further stimulated by PCNA. In Archaeoglobus fulgidus (strain ATCC 49558 / DSM 4304 / JCM 9628 / NBRC 100126 / VC-16), this protein is Replication factor C large subunit (rfcL).